A 1323-amino-acid polypeptide reads, in one-letter code: DNA-directed RNA polymerase subunit beta' (1323 aa).

Zn(2+) contacts are provided by cysteine 60, cysteine 62, cysteine 75, and cysteine 78. Mg(2+) is bound by residues aspartate 535, aspartate 537, and aspartate 539. Cysteine 894, cysteine 977, cysteine 984, and cysteine 987 together coordinate Zn(2+).

It belongs to the RNA polymerase beta' chain family. The RNAP catalytic core consists of 2 alpha, 1 beta, 1 beta' and 1 omega subunit. When a sigma factor is associated with the core the holoenzyme is formed, which can initiate transcription. Mg(2+) serves as cofactor. Requires Zn(2+) as cofactor.

The catalysed reaction is RNA(n) + a ribonucleoside 5'-triphosphate = RNA(n+1) + diphosphate. Its function is as follows. DNA-dependent RNA polymerase catalyzes the transcription of DNA into RNA using the four ribonucleoside triphosphates as substrates. The protein is DNA-directed RNA polymerase subunit beta' of Corynebacterium jeikeium (strain K411).